The primary structure comprises 155 residues: Deoxyuridine 5'-triphosphate nucleotidohydrolase (155 aa).

Substrate-binding positions include 74–76 (RSG), asparagine 87, and 91–93 (LID).

It belongs to the dUTPase family. The cofactor is Mg(2+).

The catalysed reaction is dUTP + H2O = dUMP + diphosphate + H(+). The protein operates within pyrimidine metabolism; dUMP biosynthesis; dUMP from dCTP (dUTP route): step 2/2. Functionally, this enzyme is involved in nucleotide metabolism: it produces dUMP, the immediate precursor of thymidine nucleotides and it decreases the intracellular concentration of dUTP so that uracil cannot be incorporated into DNA. In Xylella fastidiosa (strain M23), this protein is Deoxyuridine 5'-triphosphate nucleotidohydrolase.